The following is a 409-amino-acid chain: MYVRRLRRERSNQAIADYLGSNGYTDALEAFRKEADMPNEIERKYGGLLEKKWTSVIRLQKKVMELEAKLSEAEKEAIEGAPTKAKRTPTDWIPRPPEKFALAGHRATVTRVVFHPVFSMMASASEDATIKIWDFETGEYERTLKGHTDSVQDLAFDSHGKLLASCSSDLSIKLWDFQQTFECVKTMHGHDHNVSSVSFVPAGDYLLSASRDKTIKMWEVATGYCVKTFTGHREWVRMVRVNVDGSLMASCSNDHSVRVWQTNSKECKAELREHENTVECIAWAPESAAAAINEAAGADNKKGAHQGPFLASGSRDKTIRVWDVNSGLCLFTLVGHDNWVRGIVFHPGGKYMLSASDDKTLRIWDLRNKRCMKTLYAHSHFCTSLDMHKSHPYVISGSVDTTVKVWECR.

Residues 7–39 (RRERSNQAIADYLGSNGYTDALEAFRKEADMPN) enclose the LisH domain. A coiled-coil region spans residues 54 to 81 (TSVIRLQKKVMELEAKLSEAEKEAIEGA). WD repeat units lie at residues 104–145 (GHRA…RTLK), 146–185 (GHTD…ECVK), 189–228 (GHDH…CVKT), 231–270 (GHRE…CKAE), 273–332 (EHEN…CLFT), 335–374 (GHDN…CMKT), and 377–409 (AHSH…WECR).

Belongs to the WD repeat LIS1/nudF family.

Its subcellular location is the cytoplasm. The protein localises to the cytoskeleton. It is found in the microtubule organizing center. It localises to the centrosome. Positively regulates the activity of the minus-end directed microtubule motor protein dynein. May enhance dynein-mediated microtubule sliding by targeting dynein to the microtubule plus end. Required for several dynein- and microtubule-dependent processes. The polypeptide is Lissencephaly-1 homolog (Aedes aegypti (Yellowfever mosquito)).